Here is a 741-residue protein sequence, read N- to C-terminus: Catalase-peroxidase (741 aa).

The signal sequence occupies residues 1–23; it reads MLKKIITALGMSGMLLASSNAIA. Residues 102 to 223 constitute a cross-link (tryptophyl-tyrosyl-methioninium (Trp-Tyr) (with M-249)); sequence WHDAGTYRIY…YAATQMGLIY (122 aa). Residue His-103 is the Proton acceptor of the active site. Positions 223 to 249 form a cross-link, tryptophyl-tyrosyl-methioninium (Tyr-Met) (with W-102); sequence YVNPEGPDGKPDIKGAASEIRQAFRAM. Residue His-264 participates in heme b binding.

Belongs to the peroxidase family. Peroxidase/catalase subfamily. As to quaternary structure, homodimer or homotetramer. It depends on heme b as a cofactor. In terms of processing, formation of the three residue Trp-Tyr-Met cross-link is important for the catalase, but not the peroxidase activity of the enzyme.

It carries out the reaction H2O2 + AH2 = A + 2 H2O. The enzyme catalyses 2 H2O2 = O2 + 2 H2O. Its function is as follows. Bifunctional enzyme with both catalase and broad-spectrum peroxidase activity. This is Catalase-peroxidase from Francisella tularensis subsp. holarctica (strain FTNF002-00 / FTA).